We begin with the raw amino-acid sequence, 146 residues long: Large ribosomal subunit protein uL13 (146 aa).

Belongs to the universal ribosomal protein uL13 family. As to quaternary structure, part of the 50S ribosomal subunit.

This protein is one of the early assembly proteins of the 50S ribosomal subunit, although it is not seen to bind rRNA by itself. It is important during the early stages of 50S assembly. This is Large ribosomal subunit protein uL13 from Methylobacillus flagellatus (strain ATCC 51484 / DSM 6875 / VKM B-1610 / KT).